We begin with the raw amino-acid sequence, 242 residues long: Uridylate kinase (242 aa).

Residue 12-15 coordinates ATP; that stretch reads KLSG. The involved in allosteric activation by GTP stretch occupies residues 20–25; it reads GQKGYG. Gly54 is a binding site for UMP. 2 residues coordinate ATP: Gly55 and Arg59. UMP contacts are provided by residues Asp74 and 135 to 142; that span reads TGNPYFST. Residues Gln163, Tyr168, and Asp171 each coordinate ATP.

Belongs to the UMP kinase family. Homohexamer.

It localises to the cytoplasm. It carries out the reaction UMP + ATP = UDP + ADP. Its pathway is pyrimidine metabolism; CTP biosynthesis via de novo pathway; UDP from UMP (UMPK route): step 1/1. With respect to regulation, allosterically activated by GTP. Inhibited by UTP. Catalyzes the reversible phosphorylation of UMP to UDP. This is Uridylate kinase from Desulforamulus reducens (strain ATCC BAA-1160 / DSM 100696 / MI-1) (Desulfotomaculum reducens).